A 236-amino-acid chain; its full sequence is Cutinase (236 aa).

The first 20 residues, 1–20 (MSLTLFSFLSLVSILCIVTA), serve as a signal peptide directing secretion. Cysteine 66 and cysteine 143 are disulfide-bonded. The Nucleophile role is filled by serine 154. An intrachain disulfide couples cysteine 202 to cysteine 209. Aspartate 206 is an active-site residue. Residue histidine 218 is the Proton donor/acceptor of the active site.

It belongs to the cutinase family. In terms of processing, the 2 disulfide bonds play a critical role in holding the catalytic residues in juxta-position; reduction of the disulfide bridges results in the complete inactivation of the enzyme.

It localises to the secreted. The catalysed reaction is cutin + H2O = cutin monomers.. Its function is as follows. Catalyzes the hydrolysis of complex carboxylic polyesters found in the cell wall of plants. Degrades cutin, a macromolecule that forms the structure of the plant cuticle. Allows pathogenic fungi to penetrate through the cuticular barrier into the host plant during the initial stage of fungal infection. The chain is Cutinase (CUT1) from Blumeria hordei (Barley powdery mildew).